We begin with the raw amino-acid sequence, 338 residues long: Protein pelota homolog (338 aa).

This sequence belongs to the eukaryotic release factor 1 family. Pelota subfamily. In terms of assembly, monomer. The cofactor is a divalent metal cation.

The protein localises to the cytoplasm. In terms of biological role, may function in recognizing stalled ribosomes, interact with stem-loop structures in stalled mRNA molecules, and effect endonucleolytic cleavage of the mRNA. May play a role in the release non-functional ribosomes and degradation of damaged mRNAs. Has endoribonuclease activity. In Caldivirga maquilingensis (strain ATCC 700844 / DSM 13496 / JCM 10307 / IC-167), this protein is Protein pelota homolog.